A 213-amino-acid chain; its full sequence is Bcl-2-related ovarian killer protein (213 aa).

At S7 the chain carries Phosphoserine. The interval 15–45 (MDAFDRSPTDKELVAQAKALGREYVHARLLR) is interactions with ITPR1. Glycyl lysine isopeptide (Lys-Gly) (interchain with G-Cter in ubiquitin) cross-links involve residues K25 and K32. The BH4 signature appears at 32–44 (KALGREYVHARLL). Positions 67 to 83 (VCTVLLRLGDELEQIRP) match the BH3 motif. The segment at 71–79 (LLRLGDELE) is nuclear export signal. Residues 113–132 (HIFSAGITWGKVVSLYSVAA) carry the BH1 motif. Glycyl lysine isopeptide (Lys-Gly) (interchain with G-Cter in ubiquitin) cross-links involve residues K160 and K177. The BH2 motif lies at 165–179 (WLRRRGGWTDVLKCV). Residues 190 to 210 (WLVATLCSFGRFLKAAFFLLL) form a helical membrane-spanning segment.

Belongs to the Bcl-2 family. In terms of assembly, monomer; positively regulates apoptotic process. Homodimer. Heterodimer. Oligomer; promoted by apoptotic stimuli and BH3-only proteins; mediates constitutive activation. Interacts (via BH4 domain) with ITPR1; enhances BOK expression and stabilization; limits apoptosis and prevents ubiquitination and then degradation; protects ITPR1 from proteolysis by CASP3 during apoptosis. Interacts with ITPR2 and ITPR3; binds most strongly to ITPR2, and barely to ITPR3; regulates their expression. Interacts with XPO1; translocates to the cytoplasm. Interacts with BNIP3; promotes oligomerization. In terms of processing, ubiquitinated by AMFR/gp78 E3 ubiquitin ligase complex; mediates degradation by ubiquitin-proteasome pathway in a VCP/p97-dependent manner; prevents from proapoptotic activity; promotes degradation of newly synthesized proteins that are not ITPR1 associated. As to expression, widely expressed. Highly expressed in brain, kidney, and spleen.

The protein resides in the mitochondrion membrane. It localises to the endoplasmic reticulum membrane. It is found in the mitochondrion inner membrane. The protein localises to the cytoplasm. Its subcellular location is the nucleus. The protein resides in the mitochondrion. It localises to the endoplasmic reticulum. It is found in the mitochondrion outer membrane. The protein localises to the early endosome membrane. Its subcellular location is the recycling endosome membrane. The protein resides in the nucleus outer membrane. It localises to the golgi apparatus. It is found in the cis-Golgi network membrane. The protein localises to the trans-Golgi network membrane. Its subcellular location is the membrane. Its function is as follows. Apoptosis regulator that functions through different apoptotic signaling pathways. Plays a roles as pro-apoptotic protein that positively regulates intrinsic apoptotic process in a BAX- and BAK1-dependent manner or in a BAX- and BAK1-independent manner. In response to endoplasmic reticulum stress promotes mitochondrial apoptosis through downstream BAX/BAK1 activation and positive regulation of PERK-mediated unfolded protein response. Activates apoptosis independently of heterodimerization with survival-promoting BCL2 and BCL2L1 through induction of mitochondrial outer membrane permeabilization, in a BAX- and BAK1-independent manner, in response to inhibition of ERAD-proteasome degradation system, resulting in cytochrome c release. In response to DNA damage, mediates intrinsic apoptotic process in a TP53-dependent manner. Plays a role in granulosa cell apoptosis by CASP3 activation. Plays a roles as anti-apoptotic protein during neuronal apoptotic process, by negatively regulating poly ADP-ribose polymerase-dependent cell death through regulation of neuronal calcium homeostasis and mitochondrial bioenergetics in response to NMDA excitation. In addition to its role in apoptosis, may regulate trophoblast cell proliferation during the early stages of placental development, by acting on G1/S transition through regulation of CCNE1 expression. May also play a role as an inducer of autophagy by disrupting interaction between MCL1 and BECN1. The sequence is that of Bcl-2-related ovarian killer protein from Mus musculus (Mouse).